The primary structure comprises 887 residues: Bifunctional uridylyltransferase/uridylyl-removing enzyme (887 aa).

The interval 1–329 (MKGLNAKPFS…FPDEEAVTTI (329 aa)) is uridylyltransferase. Residues 330 to 686 (INERFQKRGD…TRAAETGAGV (357 aa)) are uridylyl-removing. Residues 448–570 (VDEHILMVVR…MRDERHLIAL (123 aa)) form the HD domain. 2 consecutive ACT domains span residues 687–772 (EVLV…GRLS) and 796–871 (VLSI…PETP). The segment at 864-887 (TSPQPETPGKAPGKPSAGDRIIPR) is disordered.

It belongs to the GlnD family. Mg(2+) is required as a cofactor.

It catalyses the reaction [protein-PII]-L-tyrosine + UTP = [protein-PII]-uridylyl-L-tyrosine + diphosphate. The enzyme catalyses [protein-PII]-uridylyl-L-tyrosine + H2O = [protein-PII]-L-tyrosine + UMP + H(+). Uridylyltransferase (UTase) activity is inhibited by glutamine, while glutamine activates uridylyl-removing (UR) activity. Its function is as follows. Modifies, by uridylylation and deuridylylation, the PII regulatory proteins (GlnB and homologs), in response to the nitrogen status of the cell that GlnD senses through the glutamine level. Under low glutamine levels, catalyzes the conversion of the PII proteins and UTP to PII-UMP and PPi, while under higher glutamine levels, GlnD hydrolyzes PII-UMP to PII and UMP (deuridylylation). Thus, controls uridylylation state and activity of the PII proteins, and plays an important role in the regulation of nitrogen assimilation and metabolism. This chain is Bifunctional uridylyltransferase/uridylyl-removing enzyme, found in Nitrosospira multiformis (strain ATCC 25196 / NCIMB 11849 / C 71).